The chain runs to 622 residues: Low affinity potassium transport system protein Kup (622 aa).

12 consecutive transmembrane segments (helical) span residues 9–29, 49–69, 103–123, 137–157, 165–185, 213–233, 247–267, 276–296, 337–357, 363–383, 396–416, and 419–439; these read LPAITLAAIGVVYGDIGTSPL, VFGFLSLIFWLLIFVVSIKYL, VIMGLIGGSFFYGEVVITPAI, PQLDTWIVPLSIVVLTLLFMI, VGKLFAPIMLTWFLILAVLGL, VSFIALGAVVLSITGVEALYA, WFTVVLPSLVLNYFGQGALLL, PFFLLAPDWALIPLLILAALA, IYIPFVNWLLYFAVVVVIVSF, LAAAYGIAVTGTMVLTSILST, LVALILVAFLCVDIPLFSANL, and LLSGGWLPLSLGLIMFTIMTT.

The protein belongs to the HAK/KUP transporter (TC 2.A.72) family.

The protein localises to the cell inner membrane. The enzyme catalyses K(+)(in) + H(+)(in) = K(+)(out) + H(+)(out). Its function is as follows. Responsible for the low-affinity transport of potassium into the cell. Likely operates as a K(+):H(+) symporter. The polypeptide is Low affinity potassium transport system protein Kup (Salmonella arizonae (strain ATCC BAA-731 / CDC346-86 / RSK2980)).